A 240-amino-acid chain; its full sequence is Probable septum site-determining protein MinC (240 aa).

Belongs to the MinC family. Interacts with MinD and FtsZ.

In terms of biological role, cell division inhibitor that blocks the formation of polar Z ring septums. Rapidly oscillates between the poles of the cell to destabilize FtsZ filaments that have formed before they mature into polar Z rings. Prevents FtsZ polymerization. The chain is Probable septum site-determining protein MinC from Acinetobacter baumannii (strain ACICU).